The chain runs to 71 residues: Glucose-repressible gene protein (71 aa).

The disordered stretch occupies residues 19 to 71 (TATASKEANKDVAKDSNQGVGTRLNAAGDAISDKVSENKHDAKAEAHKQGATH). Positions 49-71 (ISDKVSENKHDAKAEAHKQGATH) are enriched in basic and acidic residues.

This is Glucose-repressible gene protein (grg-1) from Neurospora crassa (strain ATCC 24698 / 74-OR23-1A / CBS 708.71 / DSM 1257 / FGSC 987).